The following is a 192-amino-acid chain: Peptidyl-tRNA hydrolase (192 aa).

Residue His-19 is the Proton acceptor of the active site. The tRNA site is built by Tyr-64, Asn-66, and Asn-112.

This sequence belongs to the PTH family. Monomer.

The protein resides in the cytoplasm. The catalysed reaction is an N-acyl-L-alpha-aminoacyl-tRNA + H2O = an N-acyl-L-amino acid + a tRNA + H(+). Its function is as follows. Hydrolyzes ribosome-free peptidyl-tRNAs (with 1 or more amino acids incorporated), which drop off the ribosome during protein synthesis, or as a result of ribosome stalling. In terms of biological role, catalyzes the release of premature peptidyl moieties from peptidyl-tRNA molecules trapped in stalled 50S ribosomal subunits, and thus maintains levels of free tRNAs and 50S ribosomes. The protein is Peptidyl-tRNA hydrolase of Acidiphilium cryptum (strain JF-5).